The sequence spans 451 residues: 2,4-dinitrotoluene dioxygenase system, large oxygenase component (451 aa).

The Rieske domain maps to 42–126 (WLFLTHDSLI…LQSVPFEKEL (85 aa)). Residues Cys84, His86, Cys104, and His107 each coordinate [2Fe-2S] cluster. Positions 211, 216, and 365 each coordinate Fe cation.

It belongs to the bacterial ring-hydroxylating dioxygenase alpha subunit family. In terms of assembly, the 2,4-dinitrotoluene dioxygenase (DNTDO) multicomponent enzyme system is composed of an electron transfer component and a dioxygenase component (iron sulfur protein (ISP)). The electron transfer component is composed of a ferredoxin reductase (DntAa) and a ferredoxin (DntAb), and the dioxygenase component is formed of a large alpha subunit (DntAc) and a small beta subunit (DntAd). Requires [2Fe-2S] cluster as cofactor. Fe(2+) serves as cofactor.

The catalysed reaction is 2,4-dinitrotoluene + NADH + O2 = 4-methyl-5-nitrocatechol + nitrite + NAD(+). In terms of biological role, component of the 2,4-dinitrotoluene dioxygenase (DNTDO) multicomponent enzyme system which catalyzes the incorporation of both atoms of molecular oxygen into 2,4-dinitrotoluene (DNT) to form 4-methyl-5-nitrocatechol (MNC) and nitrite. The alpha subunit has a catalytic role in the holoenzyme. Also able to convert naphthalene to cis-(1R,2S)-dihydroxy-1,2-dihydronaphthalene. The sequence is that of 2,4-dinitrotoluene dioxygenase system, large oxygenase component from Burkholderia sp. (strain RASC).